The primary structure comprises 338 residues: Mitochondrial glutathione transporter SLC25A40 (338 aa).

Solcar repeat units lie at residues 13–131, 139–223, and 233–327; these read VTPL…LTAL, NESR…LKKW, and PTFM…GKSF. 6 helical membrane passes run 19-39, 103-123, 145-165, 199-220, 239-259, and 298-318; these read MFASCTGAILTSLMVTPFDVV, LWSGLPPTLVMAVPATVIYFT, IVAGIVARLGAVTVISPLELI, WAPTILRDVPFSAMYWYNYEVL, FTSGALSGSFAAVVTLPFDVV, and GLFTGLIPRLIKIAPACAVMI.

The protein belongs to the mitochondrial carrier (TC 2.A.29) family.

The protein localises to the mitochondrion inner membrane. It carries out the reaction glutathione(in) = glutathione(out). Probable mitochondrial transporter required for glutathione import into mitochondria. Glutathione, which plays key roles in oxidative metabolism, is produced exclusively in the cytosol and is imported in many organelles. Mitochondrial glutathione is required for the activity and stability of proteins containing iron-sulfur clusters, as well as erythropoiesis. In Bos taurus (Bovine), this protein is Mitochondrial glutathione transporter SLC25A40.